The sequence spans 133 residues: MSTVDIDSLVEQICSLDLCKAAELVEKMEQKLGFPKGGLLTAVPAAGGNQVEGGAAAEEKTDFSVVFESYAADKKISVIKAVRECTSLGLKEAKEFVEKEGAKELIEGKKYKKEEAEEIKKKLEDAGAKVSIK.

Belongs to the bacterial ribosomal protein bL12 family. In terms of assembly, homodimer. Part of the ribosomal stalk of the 50S ribosomal subunit. Forms a multimeric L10(L12)X complex, where L10 forms an elongated spine to which 2 to 4 L12 dimers bind in a sequential fashion. Binds GTP-bound translation factors.

Its function is as follows. Forms part of the ribosomal stalk which helps the ribosome interact with GTP-bound translation factors. Is thus essential for accurate translation. The polypeptide is Large ribosomal subunit protein bL12 (Ehrlichia chaffeensis (strain ATCC CRL-10679 / Arkansas)).